Reading from the N-terminus, the 260-residue chain is Hemin import ATP-binding protein HmuV (260 aa).

The 238-residue stretch at 2-239 (IRAENITLIR…ETIARVYGIG (238 aa)) folds into the ABC transporter domain. 34 to 41 (GPNGAGKS) is a binding site for ATP.

Belongs to the ABC transporter superfamily. Heme (hemin) importer (TC 3.A.1.14.5) family. In terms of assembly, the complex is composed of two ATP-binding proteins (HmuV), two transmembrane proteins (HmuU) and a solute-binding protein (HmuT).

The protein resides in the cell inner membrane. Functionally, part of the ABC transporter complex HmuTUV involved in hemin import. Responsible for energy coupling to the transport system. In Agrobacterium fabrum (strain C58 / ATCC 33970) (Agrobacterium tumefaciens (strain C58)), this protein is Hemin import ATP-binding protein HmuV.